Consider the following 234-residue polypeptide: OVARIAN TUMOR DOMAIN-containing deubiquitinating enzyme 3 (234 aa).

The region spanning 76 to 234 (YAVDRVKGDG…SGRNHYDLLR (159 aa)) is the OTU domain. The cys-loop stretch occupies residues 81–87 (VKGDGRC). Aspartate 84 is a catalytic residue. The Nucleophile role is filled by cysteine 87. Positions 154 to 164 (IGRHDFWGGES) are variable-loop. The his-loop stretch occupies residues 224–229 (YSGRNH). Histidine 229 is a catalytic residue.

This sequence belongs to the peptidase C85 family.

The enzyme catalyses Thiol-dependent hydrolysis of ester, thioester, amide, peptide and isopeptide bonds formed by the C-terminal Gly of ubiquitin (a 76-residue protein attached to proteins as an intracellular targeting signal).. Its function is as follows. Hydrolase that can remove conjugated ubiquitin from proteins in vitro and may therefore play an important regulatory role at the level of protein turnover by preventing degradation. Cysteine protease with a preference for 'Lys-63' over 'Lys-48' over 'Met-1' -linked ubiquitin (UB) tetramers (e.g. Ub3 and Ub4) as substrates. Also cleaves RUB-GST fusion. This Arabidopsis thaliana (Mouse-ear cress) protein is OVARIAN TUMOR DOMAIN-containing deubiquitinating enzyme 3.